Reading from the N-terminus, the 411-residue chain is MFRITDFTYEGKTVFLRADLNSPVEKGRITSDARFRAVLPTIQHLLDNGAKLVIATHQSRPYKGDYITTEEHAQILSRLLGQEVEYVEDIFGKYARERISSLKPGEAIILENLRFSAEEVFNRSIEECEKTFFVRKLAPLIDYVVNDAFATAHRSQPSLVGFARLKPMIMGKLMETEVDALSKAYESEERPRVYVLGGAKVDDSLRVAENVLRKGKADLILTGGLVGQIFTLAKGFDLGDANIEFLHRKGLLELVDWAEKILDEFYPYVRTPVDFAIDYKGERLEVDLLGGEKRLFDQYPILDIGSRTVEKYREILIGAKIIVANGPMGVFEREEFAVGTVGVFRAIGESPAFSVVGGGHSIASIYRYNITGISHISTGGGAMLSFFAGEELPVLKALKISYERFKDRVKE.

Substrate is bound by residues 19–21, Arg34, 57–60, Arg114, and Arg154; these read DLN and HQSR. ATP contacts are provided by residues Glu332 and 358–361; that span reads GGHS.

It belongs to the phosphoglycerate kinase family. In terms of assembly, monomer.

It localises to the cytoplasm. The enzyme catalyses (2R)-3-phosphoglycerate + ATP = (2R)-3-phospho-glyceroyl phosphate + ADP. Its pathway is carbohydrate degradation; glycolysis; pyruvate from D-glyceraldehyde 3-phosphate: step 2/5. The polypeptide is Phosphoglycerate kinase (Thermococcus kodakarensis (strain ATCC BAA-918 / JCM 12380 / KOD1) (Pyrococcus kodakaraensis (strain KOD1))).